The sequence spans 161 residues: Small ribosomal subunit protein uS9 (161 aa).

Residues 1–21 (MATLQSLADLNRANTQTSNPE) are compositionally biased toward polar residues. Positions 1 to 25 (MATLQSLADLNRANTQTSNPENEAP) are disordered.

The protein belongs to the universal ribosomal protein uS9 family.

This Methylorubrum extorquens (strain CM4 / NCIMB 13688) (Methylobacterium extorquens) protein is Small ribosomal subunit protein uS9.